Reading from the N-terminus, the 348-residue chain is Dihydroorotase (348 aa).

Positions 14 and 16 each coordinate Zn(2+). Substrate contacts are provided by residues 16 to 18 and Asn42; that span reads HLR. Zn(2+) is bound by residues Lys100, His137, and His175. Residue Lys100 is modified to N6-carboxylysine. Position 137 (His137) interacts with substrate. Leu220 serves as a coordination point for substrate. Asp248 contributes to the Zn(2+) binding site. Asp248 is an active-site residue. 2 residues coordinate substrate: His252 and Ala264.

This sequence belongs to the metallo-dependent hydrolases superfamily. DHOase family. Class II DHOase subfamily. Homodimer. Zn(2+) serves as cofactor.

The catalysed reaction is (S)-dihydroorotate + H2O = N-carbamoyl-L-aspartate + H(+). It participates in pyrimidine metabolism; UMP biosynthesis via de novo pathway; (S)-dihydroorotate from bicarbonate: step 3/3. In terms of biological role, catalyzes the reversible cyclization of carbamoyl aspartate to dihydroorotate. The polypeptide is Dihydroorotase (Pseudomonas aeruginosa (strain UCBPP-PA14)).